The sequence spans 105 residues: Protamine-2 (105 aa).

The disordered stretch occupies residues 1–74; sequence MVRYRMRSPS…RRSCRRRRRH (74 aa). 2 positions are modified to phosphoserine: Ser-8 and Ser-10. Positions 33–42 are enriched in basic and acidic residues; sequence NPERVEDYGR. Positions 43–74 are enriched in basic residues; the sequence is THRGHHRHRRCSRKRLHRIHKRRRSCRRRRRH.

The protein belongs to the protamine P2 family. In terms of assembly, interacts with TDRP. Proteolytic processing into mature chains is required for histone eviction during spermatogenesis. Transition proteins (TNP1 and TNP2) are required for processing. Testis.

The protein resides in the nucleus. It localises to the chromosome. In terms of biological role, protamines substitute for histones in the chromatin of sperm during the haploid phase of spermatogenesis. They compact sperm DNA into a highly condensed, stable and inactive complex. In Rattus tunneyi (Tunney's rat), this protein is Protamine-2 (Prm2).